Reading from the N-terminus, the 355-residue chain is MADVLKTVWWDEVPCLIDQRLLPATLDIVRCEDLNSVIEAIRSMQVRGAPAIGITAAYGMALAAQRSTAQTSSKLLEKLAKAKALLDATRPTAINLAWATQRMLDVAQANHTLEVDQLRQRLLAEAEAIRDQDEAMCRAIGQHGKVLLAQSRNVLTHCNAGGLATAAYGTALAPIRAVHEDGQPIHVWVDETRPFLQGARLTAWELQQAGIDLTLITDNMAAYFMQQGQVDCIIVGSDRIAANGDVANKIGTYGLAVLAKAHNIPLYVAAPTSTIDLQTADGAAIPIEQRSTQEVTHIGQQAIAAAGIKVAHPAFDVTPAHLVTAIITEQGIAYPPFAEQLQTMVEAANAANAGK.

Residues R47 to A49, R90, and Q197 contribute to the substrate site. Catalysis depends on D238, which acts as the Proton donor. A substrate-binding site is contributed by N248 to K249.

The protein belongs to the eIF-2B alpha/beta/delta subunits family. MtnA subfamily.

The enzyme catalyses 5-(methylsulfanyl)-alpha-D-ribose 1-phosphate = 5-(methylsulfanyl)-D-ribulose 1-phosphate. It functions in the pathway amino-acid biosynthesis; L-methionine biosynthesis via salvage pathway; L-methionine from S-methyl-5-thio-alpha-D-ribose 1-phosphate: step 1/6. Catalyzes the interconversion of methylthioribose-1-phosphate (MTR-1-P) into methylthioribulose-1-phosphate (MTRu-1-P). This is Methylthioribose-1-phosphate isomerase from Herpetosiphon aurantiacus (strain ATCC 23779 / DSM 785 / 114-95).